Reading from the N-terminus, the 89-residue chain is Otospiralin (89 aa).

A signal peptide spans 1 to 21 (MQACMVPGLALCLLLGPLAGA).

This sequence belongs to the otospiralin family. In terms of tissue distribution, ear specific.

The protein resides in the secreted. Functionally, may be essential for the survival of the neurosensory epithelium of the inner ear. The polypeptide is Otospiralin (OTOS) (Homo sapiens (Human)).